A 577-amino-acid chain; its full sequence is Chaperonin CPN60-1, mitochondrial (577 aa).

Residues 1–34 (MYRAAASLASKARQAGNSLATRQVGSRLAWSRNY) constitute a mitochondrion transit peptide.

It belongs to the chaperonin (HSP60) family.

The protein resides in the mitochondrion. Implicated in mitochondrial protein import and macromolecular assembly. May facilitate the correct folding of imported proteins. May also prevent misfolding and promote the refolding and proper assembly of unfolded polypeptides generated under stress conditions in the mitochondrial matrix. The chain is Chaperonin CPN60-1, mitochondrial (CPN60I) from Zea mays (Maize).